Here is a 241-residue protein sequence, read N- to C-terminus: MIVFPAIDLKAGQVVRLAEGDMDRATVYGDNPAHQASLFAQAGSQYLHVVDLDGSFAGRAENREAVEGILKSFPGHVQLGGGIRTREAVSGWFDLGVSRVVMGTAALKDPQFVKDMAKEFPGGIVVAVDARDGMVATEGWADVSDVSVVDLARRFEDAGVASLLFTDIGRDGLLKGVNLDATVELARRVDIPVIASGGVKGIDDIRMLKIHEGDGIEGVITGRALYDGRLDLKAAIEMAEA.

D8 (proton acceptor) is an active-site residue. D129 acts as the Proton donor in catalysis.

This sequence belongs to the HisA/HisF family.

It is found in the cytoplasm. It catalyses the reaction 1-(5-phospho-beta-D-ribosyl)-5-[(5-phospho-beta-D-ribosylamino)methylideneamino]imidazole-4-carboxamide = 5-[(5-phospho-1-deoxy-D-ribulos-1-ylimino)methylamino]-1-(5-phospho-beta-D-ribosyl)imidazole-4-carboxamide. The protein operates within amino-acid biosynthesis; L-histidine biosynthesis; L-histidine from 5-phospho-alpha-D-ribose 1-diphosphate: step 4/9. This chain is 1-(5-phosphoribosyl)-5-[(5-phosphoribosylamino)methylideneamino] imidazole-4-carboxamide isomerase, found in Novosphingobium aromaticivorans (strain ATCC 700278 / DSM 12444 / CCUG 56034 / CIP 105152 / NBRC 16084 / F199).